The chain runs to 823 residues: Mitochondrial intermediate peptidase 2 (823 aa).

The transit peptide at 1-33 directs the protein to the mitochondrion; it reads MRRLQQSLRRRSARRCPFILIPHRLLTTSYASY. Residues 532–553 are disordered; the sequence is IDGDGLPEDWDKPYGPGLEADK. Residue H595 participates in Zn(2+) binding. The active site involves E596. Zn(2+) is bound by residues H599 and H602.

This sequence belongs to the peptidase M3 family. The cofactor is Zn(2+).

It localises to the mitochondrion matrix. The enzyme catalyses Release of an N-terminal octapeptide as second stage of processing of some proteins imported into the mitochondrion.. Cleaves proteins, imported into the mitochondrion, to their mature size. While most mitochondrial precursor proteins are processed to the mature form in one step by mitochondrial processing peptidase (MPP), the sequential cleavage by MIP of an octapeptide after initial processing by MPP is a required step for a subgroup of nuclear-encoded precursor proteins destined for the matrix or the inner membrane. The chain is Mitochondrial intermediate peptidase 2 (OCT2) from Cryptococcus neoformans var. neoformans serotype D (strain B-3501A) (Filobasidiella neoformans).